Here is a 100-residue protein sequence, read N- to C-terminus: Small ribosomal subunit protein uS14c (100 aa).

This sequence belongs to the universal ribosomal protein uS14 family. As to quaternary structure, part of the 30S ribosomal subunit.

It is found in the plastid. It localises to the chloroplast. Its function is as follows. Binds 16S rRNA, required for the assembly of 30S particles. The sequence is that of Small ribosomal subunit protein uS14c from Cryptomeria japonica (Japanese cedar).